Reading from the N-terminus, the 612-residue chain is Breast cancer type 1 susceptibility protein homolog (612 aa).

An RING-type zinc finger spans residues C21–R61. Residues R140 to E173 are disordered. 2 consecutive BRCT domains span residues R415–I477 and E505–A603.

In terms of assembly, heterodimer (via RING-type zinc finger) with brd-1 to form the core CeBCD complex. Brc-1-brd-1 heterodimer-containing CeBCD complexes bound to chromatin are activated as an E3-ubiquitin ligase in response to DNA damage. The heterodimer interacts with the recombinase rad-51 following ionizing irradiation; the interaction is direct. The heterodimer interacts the E2-ubiquitin-conjugating enzyme let-70 following ionizing irradiation. The heterodimer interacts with the pro-crossover proteins msh-5 and syp-3. Post-translationally, phosphorylation of CeBCD complexes is required for E3 ubiquitin-protein ligase activity.

It localises to the nucleus. Its subcellular location is the chromosome. It is found in the cytoplasm. The enzyme catalyses S-ubiquitinyl-[E2 ubiquitin-conjugating enzyme]-L-cysteine + [acceptor protein]-L-lysine = [E2 ubiquitin-conjugating enzyme]-L-cysteine + N(6)-ubiquitinyl-[acceptor protein]-L-lysine.. It participates in protein modification; protein ubiquitination. E3 ubiquitin-protein ligase activity of CeBCD complexes occurs at DNA damage sites. Following DNA damage, E3 ubiquitin-protein ligase activity is reduced by caffeine treatment (inhibitor of ATM and ATK kinase activity). E3 ubiquitin-protein ligase that specifically mediates the formation of polyubiquitin chains and plays a central role in DNA repair. Plays a role in triggering cellular responses at damage sites in response to DNA damage that may be induced by UV and ionizing radiation for example. Functions in double-strand break repair, and is required for homologous recombination between sister chromatids in meiotic and mitotic cells. In particular, protects against chromosome non-disjunction and nuclear fragmentation during meiotic double-strand break repair to ensure sister chromatid recombination and aid chromosome stability. Required for normal cell cycle progression. Along with brap-2 modulates the expression of cell cycle arrest protein cki-1 in response to increased levels of reactive oxygen species. Constituent of the CeBCD complex that possesses E3 ubiquitin-protein ligase activity. When bound to chromatin, the brc-1-brd-1 heterodimer within the CeBCD complex is inactive during normal conditions, but in response to DNA damage, the brc-1-brd-1 heterodimer associates with other proteins such as the recombinase rad-51 or the E2-ubiquitin-conjugating enzyme let-70, which activate the CeBCD complex as an E3-ubiquitin ligase. Moreover, association between the brc-1-brd-1 heterodimer and rad-51 and let-70, probably requires DNA checkpoint proteins such as atl-1 and mre-11 in order to induce ubiquitination at DNA damage sites. To this end, the brc-1-brd-1 heterodimer coordinates a diverse range of cellular pathways such as DNA damage repair, ubiquitination and transcriptional regulation to maintain genomic stability. This is Breast cancer type 1 susceptibility protein homolog from Caenorhabditis elegans.